A 473-amino-acid polypeptide reads, in one-letter code: RUN domain-containing protein 3B (473 aa).

The disordered stretch occupies residues 1-24 (MASRSLGGLSGIRGGGGGGGKKSL). The segment covering 8–21 (GLSGIRGGGGGGGK) has biased composition (gly residues). At R13 the chain carries Omega-N-methylarginine. One can recognise an RUN domain in the interval 57–206 (DDSSPEFNNF…IDFSFCLKGE (150 aa)). A phosphoserine mark is found at S232 and S233. Residues 317–342 (AHKLEKEQLEYIIVELQDQLTVLKNN) are a coiled coil. A compositionally biased stretch (polar residues) spans 399 to 422 (SLSQTSLDPGQSQEGDGKQDTLNV). Residues 399-428 (SLSQTSLDPGQSQEGDGKQDTLNVMSEGKE) are disordered.

It belongs to the RUNDC3 family. As to quaternary structure, interacts with RAP2A. As to expression, isoform 2 is expressed at high levels in brain, thymus, ovary, testis, leukocyte, liver, small intestine and prostate. Isoform 1 is expressed in the brain, testis and adrenal gland. It is activated in tumorigenic breast cancer cell lines and in the primary tumor of breast cancer patients. Activation also correlates with metastatic lymph node invasion and can be detected in metastatic epithelial cells from the lymph nodes and in the bone marrow of patients.

The polypeptide is RUN domain-containing protein 3B (RUNDC3B) (Homo sapiens (Human)).